The chain runs to 102 residues: Small ribosomal subunit protein uS10 (102 aa).

It belongs to the universal ribosomal protein uS10 family. Part of the 30S ribosomal subunit.

In terms of biological role, involved in the binding of tRNA to the ribosomes. The chain is Small ribosomal subunit protein uS10 from Methanocorpusculum labreanum (strain ATCC 43576 / DSM 4855 / Z).